Here is a 217-residue protein sequence, read N- to C-terminus: Probable GTP-binding protein EngB (217 aa).

The EngB-type G domain occupies Glu-27–Glu-201. GTP-binding positions include Gly-35 to Ser-42, Gly-62 to Leu-66, Asp-80 to Gly-83, Thr-147 to Asp-150, and Phe-180 to Ser-182. Ser-42 and Thr-64 together coordinate Mg(2+).

It belongs to the TRAFAC class TrmE-Era-EngA-EngB-Septin-like GTPase superfamily. EngB GTPase family. Requires Mg(2+) as cofactor.

Functionally, necessary for normal cell division and for the maintenance of normal septation. The polypeptide is Probable GTP-binding protein EngB (Yersinia enterocolitica serotype O:8 / biotype 1B (strain NCTC 13174 / 8081)).